The following is a 281-amino-acid chain: 4-diphosphocytidyl-2-C-methyl-D-erythritol kinase (281 aa).

Lys15 is an active-site residue. Pro98–Ser108 is an ATP binding site. Residue Asp140 is part of the active site.

Belongs to the GHMP kinase family. IspE subfamily.

The catalysed reaction is 4-CDP-2-C-methyl-D-erythritol + ATP = 4-CDP-2-C-methyl-D-erythritol 2-phosphate + ADP + H(+). The protein operates within isoprenoid biosynthesis; isopentenyl diphosphate biosynthesis via DXP pathway; isopentenyl diphosphate from 1-deoxy-D-xylulose 5-phosphate: step 3/6. Catalyzes the phosphorylation of the position 2 hydroxy group of 4-diphosphocytidyl-2C-methyl-D-erythritol. The polypeptide is 4-diphosphocytidyl-2-C-methyl-D-erythritol kinase (Neisseria gonorrhoeae (strain ATCC 700825 / FA 1090)).